The sequence spans 266 residues: Glucosamine-6-phosphate deaminase (266 aa).

Asp-72 serves as the catalytic Proton acceptor; for enolization step. Asp-141 acts as the For ring-opening step in catalysis. The active-site Proton acceptor; for ring-opening step is His-143. Glu-148 acts as the For ring-opening step in catalysis.

This sequence belongs to the glucosamine/galactosamine-6-phosphate isomerase family. NagB subfamily. In terms of assembly, homohexamer.

It catalyses the reaction alpha-D-glucosamine 6-phosphate + H2O = beta-D-fructose 6-phosphate + NH4(+). It participates in amino-sugar metabolism; N-acetylneuraminate degradation; D-fructose 6-phosphate from N-acetylneuraminate: step 5/5. With respect to regulation, allosterically activated by N-acetylglucosamine 6-phosphate (GlcNAc6P). Catalyzes the reversible isomerization-deamination of glucosamine 6-phosphate (GlcN6P) to form fructose 6-phosphate (Fru6P) and ammonium ion. The sequence is that of Glucosamine-6-phosphate deaminase from Edwardsiella ictaluri (strain 93-146).